A 482-amino-acid chain; its full sequence is Catalase (482 aa).

Residues methionine 1–serine 23 are compositionally biased toward polar residues. The disordered stretch occupies residues methionine 1 to glycine 28. Residues histidine 55 and asparagine 128 contribute to the active site. Heme is bound at residue tyrosine 338. The segment at serine 370–alanine 395 is disordered.

It belongs to the catalase family. Heme serves as cofactor.

It catalyses the reaction 2 H2O2 = O2 + 2 H2O. Its function is as follows. Decomposes hydrogen peroxide into water and oxygen; serves to protect cells from the toxic effects of hydrogen peroxide. The sequence is that of Catalase (cat) from Onchocerca volvulus endobacterium.